Consider the following 457-residue polypeptide: MSAGKIVQIIGAVIDVEFPQDAVPKVYDALKVESGLTLEVQQQLGGGVVRCIALGTSDGLKRGLKVENTNNPIQVPVGTKTLGRIMNVLGEPIDEQGAIGEEERWAIHRSAPSYEEQSNSTELLETGIKVIDLICPFAKGGKVGLFGGAGVGKTVNMMELIRNIAIEHSGYSVFAGVGERTREGNDFYHEMKDSNVLDKVSLVYGQMNEPPGNRLRVALTGLTMAEKFRDEGRDVLFFVDNIYRYTLAGTEVSALLGRMPSAVGYQPTLAEEMGVLQERITSTKTGSITSVQAVYVPADDLTDPSPATTFAHLDSTVVLSRQIASLGIYPAVDPLDSTSRQLDPLVVGQEHYDVARGVQGILQRYKELKDIIAILGMDELSEEDKLVVARARKIERFLSQPFFVAEVFTGSPGKYVTLKDTIRGFKGILEGEYDHIPEQAFYMVGSIDEVLEKAKNM.

147-154 contributes to the ATP binding site; it reads GGAGVGKT.

This sequence belongs to the ATPase alpha/beta chains family. In terms of assembly, F-type ATPases have 2 components, CF(1) - the catalytic core - and CF(0) - the membrane proton channel. CF(1) has five subunits: alpha(3), beta(3), gamma(1), delta(1), epsilon(1). CF(0) has three main subunits: a(1), b(2) and c(9-12). The alpha and beta chains form an alternating ring which encloses part of the gamma chain. CF(1) is attached to CF(0) by a central stalk formed by the gamma and epsilon chains, while a peripheral stalk is formed by the delta and b chains.

The protein resides in the cell inner membrane. The catalysed reaction is ATP + H2O + 4 H(+)(in) = ADP + phosphate + 5 H(+)(out). In terms of biological role, produces ATP from ADP in the presence of a proton gradient across the membrane. The catalytic sites are hosted primarily by the beta subunits. The polypeptide is ATP synthase subunit beta (Haemophilus influenzae (strain PittEE)).